The sequence spans 280 residues: Ribosomal RNA small subunit methyltransferase A (280 aa).

Residues Leu24, Gly49, Glu70, Asp95, and Asn118 each contribute to the S-adenosyl-L-methionine site.

Belongs to the class I-like SAM-binding methyltransferase superfamily. rRNA adenine N(6)-methyltransferase family. RsmA subfamily.

The protein resides in the cytoplasm. It catalyses the reaction adenosine(1518)/adenosine(1519) in 16S rRNA + 4 S-adenosyl-L-methionine = N(6)-dimethyladenosine(1518)/N(6)-dimethyladenosine(1519) in 16S rRNA + 4 S-adenosyl-L-homocysteine + 4 H(+). Specifically dimethylates two adjacent adenosines (A1518 and A1519) in the loop of a conserved hairpin near the 3'-end of 16S rRNA in the 30S particle. May play a critical role in biogenesis of 30S subunits. In Syntrophus aciditrophicus (strain SB), this protein is Ribosomal RNA small subunit methyltransferase A.